A 3563-amino-acid polypeptide reads, in one-letter code: D-lysergyl-peptide-synthetase subunit 1 (3563 aa).

Residues 307-706 (SCSPRPNPQA…LGRKDDQVKI (400 aa)) form an adenylation (A) domain 1 region. A Carrier 1 domain is found at 844 to 921 (EPKSDREKLL…EIVIVSTSAT (78 aa)). S881 carries the O-(pantetheine 4'-phosphoryl)serine modification. Residues 963 to 1354 (EDIYPCTHLQ…EHILTEIHSN (392 aa)) are condensation (C) domain 1. An adenylation (A) domain 2 region spans residues 1397–1804 (QEKCQAQPDA…RRKDAQVKIR (408 aa)). The Carrier 2 domain occupies 1944 to 2020 (PPSNATEHEI…KLALARGVTQ (77 aa)). An O-(pantetheine 4'-phosphoryl)serine modification is found at S1981. A condensation (C) domain 2 region spans residues 2067-2486 (ERIYPCSPIQ…ALPVLDEDQM (420 aa)). Residues 2511–2909 (QCIRCPDSPS…GRNDDQVKVR (399 aa)) are adenylation (A) domain 3. One can recognise a Carrier 3 domain in the interval 3025–3104 (PPRTALEAEL…RFGSYRRAGA (80 aa)). S3064 bears the O-(pantetheine 4'-phosphoryl)serine mark. The segment at 3166 to 3451 (LYFSKPMASE…VAKSTTWSSD (286 aa)) is cyclization (Cyc) domain.

It belongs to the NRP synthetase family.

It participates in alkaloid biosynthesis; ergot alkaloid biosynthesis. In terms of biological role, D-lysergyl-peptide-synthetase subunit 1; part of the gene cluster that mediates the biosynthesis of fungal ergot alkaloid. DmaW catalyzes the first step of ergot alkaloid biosynthesis by condensing dimethylallyl diphosphate (DMAP) and tryptophan to form 4-dimethylallyl-L-tryptophan. The second step is catalyzed by the methyltransferase easF that methylates 4-dimethylallyl-L-tryptophan in the presence of S-adenosyl-L-methionine, resulting in the formation of 4-dimethylallyl-L-abrine. The catalase easC and the FAD-dependent oxidoreductase easE then transform 4-dimethylallyl-L-abrine to chanoclavine-I which is further oxidized by easD in the presence of NAD(+), resulting in the formation of chanoclavine-I aldehyde. Agroclavine dehydrogenase easG then mediates the conversion of chanoclavine-I aldehyde to agroclavine via a non-enzymatic adduct reaction: the substrate is an iminium intermediate that is formed spontaneously from chanoclavine-I aldehyde in the presence of glutathione. The presence of easA is not required to complete this reaction. Further conversion of agroclavine to paspalic acid is a two-step process involving oxidation of agroclavine to elymoclavine and of elymoclavine to paspalic acid, the second step being performed by the elymoclavine oxidase cloA. Paspalic acid is then further converted to D-lysergic acid. Ergopeptines are assembled from D-lysergic acid and three different amino acids by the D-lysergyl-peptide-synthetases composed each of a monomudular and a trimodular nonribosomal peptide synthetase subunit. LpsB and lpsC encode the monomodular subunits responsible for D-lysergic acid activation and incorporation into the ergopeptine backbone. LpsA1 and A2 subunits encode the trimodular nonribosomal peptide synthetase assembling the tripeptide portion of ergopeptines. LpsA1 is responsible for formation of the major ergopeptine, ergotamine, and lpsA2 for alpha-ergocryptine, the minor ergopeptine of the total alkaloid mixture elaborated by C.purpurea. D-lysergyl-tripeptides are assembled by the nonribosomal peptide synthetases and released as N-(D-lysergyl-aminoacyl)-lactams. Cyclolization of the D-lysergyl-tripeptides is performed by the Fe(2+)/2-ketoglutarate-dependent dioxygenase easH which introduces a hydroxyl group into N-(D-lysergyl-aminoacyl)-lactam at alpha-C of the aminoacyl residue followed by spontaneous condensation with the terminal lactam carbonyl group. This Claviceps purpurea (Ergot fungus) protein is D-lysergyl-peptide-synthetase subunit 1.